The chain runs to 205 residues: MKKELILKALKLRDMGFPSGDIAEELNISVKTALYLTLNGEELLKAEESPKEDSEKLDIFLEWDNVRASSRRLRNISKIICDMLSDVEFDGVVGISSGGVPLATLISDELDKNFSIYVPKKHIHTEKEKTTGFIGQNMSSIVGKDVIIVDDVMTSGNSVKETIKYLKGIANPKKVFVVMDKSGIDEIEGVSIEHLFRTGVVDIKK.

It belongs to the purine/pyrimidine phosphoribosyltransferase family. GfcR subfamily.

In Methanococcus maripaludis (strain DSM 14266 / JCM 13030 / NBRC 101832 / S2 / LL), this protein is Transcriptional regulator GfcR.